The primary structure comprises 169 residues: Cytochrome c oxidase subunit 4 isoform 1, mitochondrial (169 aa).

The N-terminal 22 residues, 1–22 (MLASRALSLIGKRAISTSVCLR), are a transit peptide targeting the mitochondrion. Over 23-99 (AHGSVVKSED…FAEMNRGTNE (77 aa)) the chain is Mitochondrial matrix. At Lys-29 the chain carries N6-acetyllysine; alternate. Position 29 is an N6-succinyllysine; alternate (Lys-29). Phosphoserine is present on residues Ser-56 and Ser-58. An N6-acetyllysine; alternate modification is found at Lys-60. Lys-60 bears the N6-succinyllysine; alternate mark. An N6-acetyllysine modification is found at Lys-67. Residues 100–125 (WKTVVGMAMFFIGFTALVLIWEKSYV) traverse the membrane as a helical segment. Topologically, residues 126–169 (YGPIPHTFDRDWVAMQTKRMLDMKANPIQGFSAKWDYDKNEWKK) are mitochondrial intermembrane.

It belongs to the cytochrome c oxidase IV family. In terms of assembly, component of the cytochrome c oxidase (complex IV, CIV), a multisubunit enzyme composed of 14 subunits. The complex is composed of a catalytic core of 3 subunits MT-CO1, MT-CO2 and MT-CO3, encoded in the mitochondrial DNA, and 11 supernumerary subunits COX4I, COX5A, COX5B, COX6A, COX6B, COX6C, COX7A, COX7B, COX7C, COX8 and NDUFA4, which are encoded in the nuclear genome. The complex exists as a monomer or a dimer and forms supercomplexes (SCs) in the inner mitochondrial membrane with NADH-ubiquinone oxidoreductase (complex I, CI) and ubiquinol-cytochrome c oxidoreductase (cytochrome b-c1 complex, complex III, CIII), resulting in different assemblies (supercomplex SCI(1)III(2)IV(1) and megacomplex MCI(2)III(2)IV(2)). Interacts with PHB2; the interaction decreases in absence of SPHK2. Interacts with AFG1L. Interacts with ABCB7; this interaction allows the regulation of cellular iron homeostasis and cellular reactive oxygen species (ROS) levels in cardiomyocytes. Interacts with FLVCR2; this interaction occurs in the absence of heme and is disrupted upon heme binding. Interacts with IRGC.

It localises to the mitochondrion inner membrane. The protein operates within energy metabolism; oxidative phosphorylation. Component of the cytochrome c oxidase, the last enzyme in the mitochondrial electron transport chain which drives oxidative phosphorylation. The respiratory chain contains 3 multisubunit complexes succinate dehydrogenase (complex II, CII), ubiquinol-cytochrome c oxidoreductase (cytochrome b-c1 complex, complex III, CIII) and cytochrome c oxidase (complex IV, CIV), that cooperate to transfer electrons derived from NADH and succinate to molecular oxygen, creating an electrochemical gradient over the inner membrane that drives transmembrane transport and the ATP synthase. Cytochrome c oxidase is the component of the respiratory chain that catalyzes the reduction of oxygen to water. Electrons originating from reduced cytochrome c in the intermembrane space (IMS) are transferred via the dinuclear copper A center (CU(A)) of subunit 2 and heme A of subunit 1 to the active site in subunit 1, a binuclear center (BNC) formed by heme A3 and copper B (CU(B)). The BNC reduces molecular oxygen to 2 water molecules using 4 electrons from cytochrome c in the IMS and 4 protons from the mitochondrial matrix. The chain is Cytochrome c oxidase subunit 4 isoform 1, mitochondrial (Cox4i1) from Mus musculus (Mouse).